We begin with the raw amino-acid sequence, 121 residues long: Heme-degrading monooxygenase (121 aa).

In terms of domain architecture, ABM spans 2 to 101; it reads IIVTNTIKVE…EQREDRKGIV (100 aa). Asn6 contributes to the Fe cation binding site. Residues 76–98 form a disordered region; it reads KSDSFKKAHGRTKDTREQREDRK. Over residues 78–98 the composition is skewed to basic and acidic residues; sequence DSFKKAHGRTKDTREQREDRK. Position 84 (His84) interacts with heme.

It belongs to the antibiotic biosynthesis monooxygenase family. Heme-degrading monooxygenase IsdG subfamily. Homodimer.

It is found in the cytoplasm. It carries out the reaction heme b + 3 reduced [NADPH--hemoprotein reductase] + 3 O2 = biliverdin IXalpha + CO + Fe(2+) + 3 oxidized [NADPH--hemoprotein reductase] + 3 H2O + H(+). Functionally, allows bacterial pathogens to use the host heme as an iron source. Catalyzes the oxidative degradation of the heme macrocyclic porphyrin ring to the biliverdin in the presence of a suitable electron donor such as ascorbate or NADPH--cytochrome P450 reductase, with subsequent release of free iron. This is Heme-degrading monooxygenase from Listeria welshimeri serovar 6b (strain ATCC 35897 / DSM 20650 / CCUG 15529 / CIP 8149 / NCTC 11857 / SLCC 5334 / V8).